The sequence spans 382 residues: MKITKLTTWRLPPRWMFLKIETDEGIVGWGEPIVEGRARTVEAAVHELGDYLIGQDPARINDLWQVMYRAGFYRGGPILMSAIAGIDQALWDIKGKALNAPVWQLLGGLVRDKIKAYSWVGGDRPAEVIAGINTLRGMGFDTFKLNGCQEMGMIDSSRTVDAAVNTVAQIREAFGNDIEFGLDFHGRVSAPMAKLLIKELEPYRPLFIEEPVLAEQAEYYPRLAAQTAIPLAAGERMFSRFEFKRVLEAGGLAILQPDLSHAGGITECFKIAGMAEAADVSLAPHCPLGPIALAACLHVDFVSYNAVFQEQSMGIHYNQGAELLDFVKNKADFNMEGGYFKPLMKPGLGVDIDEDKVIEMSRRAPDWRNPVWRLADGVVAEW.

Asp-183 is a Mg(2+) binding site. Residue His-185 is the Proton donor of the active site. 2 residues coordinate Mg(2+): Glu-209 and Glu-235. His-285 functions as the Proton acceptor in the catalytic mechanism.

Belongs to the mandelate racemase/muconate lactonizing enzyme family. GalD subfamily. It depends on Mg(2+) as a cofactor.

The enzyme catalyses D-galactonate = 2-dehydro-3-deoxy-D-galactonate + H2O. It participates in carbohydrate acid metabolism; D-galactonate degradation; D-glyceraldehyde 3-phosphate and pyruvate from D-galactonate: step 1/3. Catalyzes the dehydration of D-galactonate to 2-keto-3-deoxy-D-galactonate. The polypeptide is D-galactonate dehydratase (Klebsiella pneumoniae (strain 342)).